The sequence spans 192 residues: Peptidyl-tRNA hydrolase (192 aa).

Tyrosine 14 contacts tRNA. The active-site Proton acceptor is the histidine 19. Residues tyrosine 64, asparagine 66, and asparagine 112 each contribute to the tRNA site.

The protein belongs to the PTH family. As to quaternary structure, monomer.

Its subcellular location is the cytoplasm. The catalysed reaction is an N-acyl-L-alpha-aminoacyl-tRNA + H2O = an N-acyl-L-amino acid + a tRNA + H(+). Hydrolyzes ribosome-free peptidyl-tRNAs (with 1 or more amino acids incorporated), which drop off the ribosome during protein synthesis, or as a result of ribosome stalling. In terms of biological role, catalyzes the release of premature peptidyl moieties from peptidyl-tRNA molecules trapped in stalled 50S ribosomal subunits, and thus maintains levels of free tRNAs and 50S ribosomes. This chain is Peptidyl-tRNA hydrolase, found in Anaeromyxobacter sp. (strain K).